A 159-amino-acid chain; its full sequence is Afifavidin (159 aa).

A signal peptide spans 1–23; the sequence is MRRLASLAVALPLLAVVASPALA. Positions 36–151 constitute an Avidin-like domain; sequence GVPAVSSSWV…GSDTFTLVNK (116 aa). 5 residues coordinate biotin: N46, S50, Y66, N68, and G74. A disulfide bridge connects residues C75 and C104. Residues S106, T108, and D144 each contribute to the biotin site.

This sequence belongs to the avidin/streptavidin family. In terms of assembly, exhibits a dynamic oligomeric assembly: the apo form self-assembles mostly into toroid-shaped homooctamers, with a small fraction of homodimers, yet upon biotin binding the intact afifavidin consists solely of the dimer.

It localises to the secreted. The exact role played by afifavidin is still obscure. Forms a strong non-covalent complex with biotin and 2-iminobiotin. The chain is Afifavidin from Afifella pfennigii (Rhodobium pfennigii).